The chain runs to 260 residues: ATP synthase subunit a (260 aa).

Helical transmembrane passes span 27 to 47 (FWTV…LFIW), 90 to 110 (IAPL…MDLI), 132 to 154 (SADV…YYSI), 208 to 228 (LIFI…LSVP), and 230 to 250 (AIFH…LTIV).

This sequence belongs to the ATPase A chain family. As to quaternary structure, F-type ATPases have 2 components, CF(1) - the catalytic core - and CF(0) - the membrane proton channel. CF(1) has five subunits: alpha(3), beta(3), gamma(1), delta(1), epsilon(1). CF(0) has three main subunits: a(1), b(2) and c(9-12). The alpha and beta chains form an alternating ring which encloses part of the gamma chain. CF(1) is attached to CF(0) by a central stalk formed by the gamma and epsilon chains, while a peripheral stalk is formed by the delta and b chains.

The protein resides in the cell inner membrane. In terms of biological role, key component of the proton channel; it plays a direct role in the translocation of protons across the membrane. In Aeromonas hydrophila subsp. hydrophila (strain ATCC 7966 / DSM 30187 / BCRC 13018 / CCUG 14551 / JCM 1027 / KCTC 2358 / NCIMB 9240 / NCTC 8049), this protein is ATP synthase subunit a.